Reading from the N-terminus, the 372-residue chain is DNA-directed RNA polymerase subunit alpha (372 aa).

The tract at residues M1–D268 is alpha N-terminal domain (alpha-NTD). The interval K280–E372 is alpha C-terminal domain (alpha-CTD).

Belongs to the RNA polymerase alpha chain family. In terms of assembly, homodimer. The RNAP catalytic core consists of 2 alpha, 1 beta, 1 beta' and 1 omega subunit. When a sigma factor is associated with the core the holoenzyme is formed, which can initiate transcription.

The enzyme catalyses RNA(n) + a ribonucleoside 5'-triphosphate = RNA(n+1) + diphosphate. Its function is as follows. DNA-dependent RNA polymerase catalyzes the transcription of DNA into RNA using the four ribonucleoside triphosphates as substrates. The protein is DNA-directed RNA polymerase subunit alpha of Ehrlichia chaffeensis (strain ATCC CRL-10679 / Arkansas).